The chain runs to 464 residues: ATP synthase subunit beta (464 aa).

An ATP-binding site is contributed by 153-160; it reads GGAGVGKT.

It belongs to the ATPase alpha/beta chains family. F-type ATPases have 2 components, CF(1) - the catalytic core - and CF(0) - the membrane proton channel. CF(1) has five subunits: alpha(3), beta(3), gamma(1), delta(1), epsilon(1). CF(0) has three main subunits: a(1), b(2) and c(9-12). The alpha and beta chains form an alternating ring which encloses part of the gamma chain. CF(1) is attached to CF(0) by a central stalk formed by the gamma and epsilon chains, while a peripheral stalk is formed by the delta and b chains.

The protein resides in the cell inner membrane. The enzyme catalyses ATP + H2O + 4 H(+)(in) = ADP + phosphate + 5 H(+)(out). Functionally, produces ATP from ADP in the presence of a proton gradient across the membrane. The catalytic sites are hosted primarily by the beta subunits. This chain is ATP synthase subunit beta, found in Burkholderia cenocepacia (strain ATCC BAA-245 / DSM 16553 / LMG 16656 / NCTC 13227 / J2315 / CF5610) (Burkholderia cepacia (strain J2315)).